The sequence spans 143 residues: Spliceosomal protein DIB1 (143 aa).

Alanine 2 bears the N-acetylalanine mark.

The protein belongs to the DIM1 family. As to quaternary structure, component of the U4/U6-U5 tri-snRNP complex composed of the U4, U6 and U5 snRNAs and at least PRP3, PRP4, PRP6, PRP8, PRP18, PRP31, PRP38, SNU13, SNU23, SNU66, SNU114, SPP381, SMB1, SMD1, SMD2, SMD3, SMX2, SMX3, LSM2, LSM3, LSM4, LSM5, LSM6, LSM7, LSM8, BRR2 and DIB1.

It localises to the nucleus. In terms of biological role, essential role in pre-mRNA splicing. Also essential for entry into mitosis (G2/M progression) as well as for chromosome segregation during mitosis. The sequence is that of Spliceosomal protein DIB1 (DIB1) from Saccharomyces cerevisiae (strain ATCC 204508 / S288c) (Baker's yeast).